Consider the following 217-residue polypeptide: Probable transaldolase (217 aa).

Residue Lys83 is the Schiff-base intermediate with substrate of the active site.

The protein belongs to the transaldolase family. Type 3B subfamily.

It localises to the cytoplasm. It carries out the reaction D-sedoheptulose 7-phosphate + D-glyceraldehyde 3-phosphate = D-erythrose 4-phosphate + beta-D-fructose 6-phosphate. It functions in the pathway carbohydrate degradation; pentose phosphate pathway; D-glyceraldehyde 3-phosphate and beta-D-fructose 6-phosphate from D-ribose 5-phosphate and D-xylulose 5-phosphate (non-oxidative stage): step 2/3. Its function is as follows. Transaldolase is important for the balance of metabolites in the pentose-phosphate pathway. This Jannaschia sp. (strain CCS1) protein is Probable transaldolase.